A 104-amino-acid chain; its full sequence is MAANPSGQGFQNKNRVAILAELDKEKRKLLMQNQSSTNHPGASIALTRSPLNKDFRDHAEQQHIAAQQKAALQHAHAHSSGYFITQDSAFGNLILPVLPRLEAE.

This sequence belongs to the SOSS-C family. As to quaternary structure, belongs to the multiprotein complex Integrator. Component of the SOSS complex, composed of SOSS-B (SOSS-B1/NABP2 or SOSS-B2/NABP1), SOSS-A/INTS3 and SOSS-C/INIP.

Its subcellular location is the nucleus. In terms of biological role, component of the SOSS complex, a multiprotein complex that functions downstream of the MRN complex to promote DNA repair and G2/M checkpoint. The SOSS complex associates with single-stranded DNA at DNA lesions and influences diverse endpoints in the cellular DNA damage response including cell-cycle checkpoint activation, recombinational repair and maintenance of genomic stability. Required for efficient homologous recombination-dependent repair of double-strand breaks (DSBs). This is SOSS complex subunit C (INIP) from Taeniopygia guttata (Zebra finch).